A 135-amino-acid chain; its full sequence is Putative pre-16S rRNA nuclease (135 aa).

It belongs to the YqgF nuclease family.

The protein localises to the cytoplasm. In terms of biological role, could be a nuclease involved in processing of the 5'-end of pre-16S rRNA. This Thermus thermophilus (strain ATCC 27634 / DSM 579 / HB8) protein is Putative pre-16S rRNA nuclease.